Reading from the N-terminus, the 618-residue chain is Probable Xaa-Pro aminopeptidase P (618 aa).

Residues Asp415, Asp426, Glu524, and Glu538 each coordinate Mn(2+).

Belongs to the peptidase M24B family. Mn(2+) serves as cofactor.

The catalysed reaction is Release of any N-terminal amino acid, including proline, that is linked to proline, even from a dipeptide or tripeptide.. In terms of biological role, catalyzes the removal of a penultimate prolyl residue from the N-termini of peptides. The sequence is that of Probable Xaa-Pro aminopeptidase P (AMPP) from Pyricularia oryzae (strain 70-15 / ATCC MYA-4617 / FGSC 8958) (Rice blast fungus).